The primary structure comprises 399 residues: Elongation factor Tu (399 aa).

The tr-type G domain occupies Lys-10–Glu-204. The segment at Gly-19–Thr-26 is G1. Gly-19–Thr-26 lines the GTP pocket. Thr-26 is a Mg(2+) binding site. Residues Gly-60–Asn-64 form a G2 region. Positions Asp-81 to Gly-84 are G3. Residues Asp-81–His-85 and Asn-136–Asp-139 each bind GTP. The interval Asn-136–Asp-139 is G4. The G5 stretch occupies residues Ser-174 to Leu-176.

The protein belongs to the TRAFAC class translation factor GTPase superfamily. Classic translation factor GTPase family. EF-Tu/EF-1A subfamily. Monomer.

It localises to the cytoplasm. The catalysed reaction is GTP + H2O = GDP + phosphate + H(+). In terms of biological role, GTP hydrolase that promotes the GTP-dependent binding of aminoacyl-tRNA to the A-site of ribosomes during protein biosynthesis. The sequence is that of Elongation factor Tu from Prochlorococcus marinus (strain MIT 9312).